Consider the following 440-residue polypeptide: tRNA-2-methylthio-N(6)-dimethylallyladenosine synthase (440 aa).

Residues 3–119 (KKFFIKTFGC…LPELINQAQA (117 aa)) enclose the MTTase N-terminal domain. [4Fe-4S] cluster is bound by residues cysteine 12, cysteine 48, cysteine 82, cysteine 158, cysteine 162, and cysteine 165. The region spanning 144–374 (RDNKYCAYVT…LELQKSILSE (231 aa)) is the Radical SAM core domain. Positions 377 to 437 (KKYEGTVQEV…PFSLEGELLE (61 aa)) constitute a TRAM domain.

The protein belongs to the methylthiotransferase family. MiaB subfamily. As to quaternary structure, monomer. Requires [4Fe-4S] cluster as cofactor.

It localises to the cytoplasm. It carries out the reaction N(6)-dimethylallyladenosine(37) in tRNA + (sulfur carrier)-SH + AH2 + 2 S-adenosyl-L-methionine = 2-methylsulfanyl-N(6)-dimethylallyladenosine(37) in tRNA + (sulfur carrier)-H + 5'-deoxyadenosine + L-methionine + A + S-adenosyl-L-homocysteine + 2 H(+). Functionally, catalyzes the methylthiolation of N6-(dimethylallyl)adenosine (i(6)A), leading to the formation of 2-methylthio-N6-(dimethylallyl)adenosine (ms(2)i(6)A) at position 37 in tRNAs that read codons beginning with uridine. This Aquifex aeolicus (strain VF5) protein is tRNA-2-methylthio-N(6)-dimethylallyladenosine synthase.